The sequence spans 126 residues: MPTMNQLVRKGRESKRRTKRTRALNKCPQKQGVCLRVSTRSPKKPNSALRKIAKVRLTNRNEIIAYIPGEGHNLQEHSVVMVRGGRVQDLPGVKYHCIRGVKDLQGIPGRRRGRSKYGTKKPKDYI.

Disordered stretches follow at residues 1-27 (MPTM…LNKC) and 106-126 (GIPG…KDYI). Composition is skewed to basic residues over residues 12–23 (RESKRRTKRTRA) and 109–120 (GRRRGRSKYGTK).

It belongs to the universal ribosomal protein uS12 family.

It localises to the mitochondrion. In terms of biological role, protein S12 is involved in the translation initiation step. The chain is Small ribosomal subunit protein uS12m (RPS12) from Marchantia polymorpha (Common liverwort).